A 373-amino-acid polypeptide reads, in one-letter code: Indole glucosinolate O-methyltransferase 2 (373 aa).

Residues Gly217, Asp240, Asp260, Met261, and Lys274 each contribute to the S-adenosyl-L-homocysteine site. The active-site Proton acceptor is His278.

Belongs to the class I-like SAM-binding methyltransferase superfamily. Cation-independent O-methyltransferase family.

It functions in the pathway secondary metabolite biosynthesis. Functionally, involved in indole glucosinolate biosynthesis. Catalyzes methoxylation reactions of the glucosinolate indole ring. Converts the hydroxy intermediates 4-hydroxy-indol-3-yl-methylglucosinolate (4OH-I3M) and 1-hydroxy-indol-3-yl-methylglucosinolate (1OH-I3M) to 4-methoxy-indol-3-yl-methylglucosinolate (4MO-I3M) and 1-methoxy-indol-3-yl-methylglucosinolate (1MO-I3M), respectively. The chain is Indole glucosinolate O-methyltransferase 2 from Arabidopsis thaliana (Mouse-ear cress).